A 73-amino-acid chain; its full sequence is MKHIDKIISHLVNNPEAFDQFKNGNLTLLNINEKEKKAILYAFEQGEVPRTSKWPPIEAISNFFEDDKRKSLI.

A propeptide spanning residues 1 to 52 is cleaved from the precursor; it reads MKHIDKIISHLVNNPEAFDQFKNGNLTLLNINEKEKKAILYAFEQGEVPRTS. A lipid anchor (3'-farnesyl-2',N2-cyclotryptophan) is attached at Trp54. Positions 59-73 are excised as a propeptide; it reads AISNFFEDDKRKSLI.

Interacts directly with the sensor histidine kinase ComP and stimulates its activity. Post-translationally, trp-54 is modified by farnesylation, which is essential for activity. Modified by the tryptophan prenyltransferase ComQ before export to the extracellular environment.

The protein resides in the secreted. Functionally, part of a major quorum-sensing system that regulates the development of genetic competence. Acts through the activation of the two-component regulatory system ComP/ComA composed of a sensor histidine kinase, ComP, and a response regulator, ComA. Activates the expression of the genes for biosynthesis of poly-gamma-glutamic acid (gamma-PGA), which is involved in biofilm formation in B.subtilis natto. The chain is ComX pheromone from Bacillus subtilis subsp. natto (strain BEST195).